The primary structure comprises 1360 residues: Activating molecule in BECN1-regulated autophagy protein 1B (1360 aa).

WD repeat units lie at residues 50–89 (DNPR…CLHS), 92–132 (GHRR…ESWF), and 134–174 (ESNV…AVVK). Polar residues predominate over residues 249-258 (RSSGAQANDQ). Disordered stretches follow at residues 249 to 277 (RSSG…FQYP), 315 to 364 (PTGL…NSAH), 412 to 490 (GVET…QRNN), 514 to 573 (ELER…RCRS), 587 to 616 (WERS…EDPG), 664 to 688 (PTVS…NPDE), and 754 to 796 (TLSN…MPRN). Positions 319-333 (QPSDSTQPQTQSGPS) are enriched in low complexity. The span at 350–361 (AFSSVFSGTAGN) shows a compositional bias: polar residues. The span at 428–437 (SSSSMDLLSL) shows a compositional bias: low complexity. Polar residues-rich tracts occupy residues 443-454 (GSSSSPIYTSAT) and 473-490 (DGTS…QRNN). The segment covering 590 to 607 (SGQTSSSSSSQEGPSWPL) has biased composition (low complexity). The segment covering 754 to 768 (TLSNSQADSQSNNPS) has biased composition (polar residues). Residues 775–784 (SDGDYEDIEE) are compositionally biased toward acidic residues. 2 short sequence motifs (TQT motif) span residues 1109–1111 (TQT) and 1121–1123 (TQT). Disordered stretches follow at residues 1120–1142 (ETQT…TSRH) and 1241–1360 (SQTS…LYGR). 2 stretches are compositionally biased toward polar residues: residues 1129-1142 (SAST…TSRH) and 1241-1252 (SQTSVRTAQGGN). The span at 1278–1288 (APGPSGSSGAP) shows a compositional bias: low complexity. Residues 1311 to 1321 (FGDRQPDDVQR) are compositionally biased toward basic and acidic residues. Low complexity predominate over residues 1329-1347 (NMSNHSNNNNNDHSNSYSE). Residues 1348-1360 (SRSRDYPDDLYGR) are compositionally biased toward basic and acidic residues.

The protein belongs to the WD repeat AMBRA1 family. Component of the DCX(AMBRA1) E3 ubiquitin ligase complex.

The protein resides in the endoplasmic reticulum. It localises to the cytoplasm. The protein localises to the cytoskeleton. It is found in the cytoplasmic vesicle. Its subcellular location is the autophagosome. The protein resides in the mitochondrion. It localises to the cytosol. The protein localises to the nucleus. It is found in the cell junction. Its subcellular location is the focal adhesion. Its pathway is protein modification; protein ubiquitination. Its function is as follows. Substrate-recognition component of a DCX (DDB1-CUL4-X-box) E3 ubiquitin-protein ligase complex involved in cell cycle control and autophagy. The DCX(AMBRA1) complex specifically mediates the polyubiquitination of target proteins. Acts as an upstream master regulator of the transition from G1 to S cell phase: ambra1b specifically recognizes and binds phosphorylated cyclin-D (ccnd1, ccnd2 and ccnd3), leading to cyclin-D ubiquitination by the DCX(AMBRA1) complex and subsequent degradation. Acts as a regulator of Cul5-RING (CRL5) E3 ubiquitin-protein ligase complexes by mediating ubiquitination and degradation of Elongin-C (eloc) component of CRL5 complexes. Acts as a key regulator of autophagy by modulating the BECN1-PIK3C3 complex: controls protein turnover during neuronal development, and regulates normal cell survival and proliferation. In normal conditions, ambra1b is tethered to the cytoskeleton via interaction with dyneins light chains. Upon autophagy induction, ambra1b is released from the cytoskeletal docking site to induce autophagosome nucleation by mediating ubiquitination of proteins involved in autophagy. Also acts as an activator of mitophagy. Required for skeletal muscle development. This Danio rerio (Zebrafish) protein is Activating molecule in BECN1-regulated autophagy protein 1B.